The sequence spans 145 residues: Small ribosomal subunit protein uS19 (145 aa).

Position 2 is an N-acetylalanine (Ala-2). Lys-108 participates in a covalent cross-link: Glycyl lysine isopeptide (Lys-Gly) (interchain with G-Cter in SUMO2).

The protein belongs to the universal ribosomal protein uS19 family. In terms of assembly, component of the small ribosomal subunit.

The protein localises to the cytoplasm. Functionally, component of the small ribosomal subunit. The ribosome is a large ribonucleoprotein complex responsible for the synthesis of proteins in the cell. This chain is Small ribosomal subunit protein uS19 (RPS15), found in Oryctolagus cuniculus (Rabbit).